Consider the following 167-residue polypeptide: Gametocyte-specific factor 1 (167 aa).

At serine 8 the chain carries Phosphoserine. 2 CHHC U11-48K-type zinc fingers span residues 14-41 (LLQC…RKNH) and 48-75 (LATC…DDRS). Residues cysteine 17, histidine 23, histidine 33, cysteine 37, cysteine 51, histidine 57, histidine 67, and cysteine 71 each coordinate Zn(2+).

Belongs to the UPF0224 (FAM112) family.

The protein localises to the cytoplasm. Its function is as follows. Required for spermatogenesis and is involved in the suppression of retrotransposon transcription in male germ cells. This chain is Gametocyte-specific factor 1 (GTSF1), found in Homo sapiens (Human).